We begin with the raw amino-acid sequence, 97 residues long: Integration host factor subunit alpha (97 aa).

The disordered stretch occupies residues 49 to 71; it reads FGNFDLRDKNQRPGRNPKTGEDI.

It belongs to the bacterial histone-like protein family. In terms of assembly, heterodimer of an alpha and a beta chain.

Its function is as follows. This protein is one of the two subunits of integration host factor, a specific DNA-binding protein that functions in genetic recombination as well as in transcriptional and translational control. The polypeptide is Integration host factor subunit alpha (Shewanella woodyi (strain ATCC 51908 / MS32)).